Here is a 302-residue protein sequence, read N- to C-terminus: Sushi domain-containing protein 6 (302 aa).

The signal sequence occupies residues 1–39 (MCHGKIAPKSSSEFVVTSVGHGVFLQLVILCALLGDGLA). Residues 40 to 104 (SVCPLPPEPE…TPAMEVSCHL (65 aa)) enclose the Sushi domain. Intrachain disulfides connect cysteine 42/cysteine 89 and cysteine 74/cysteine 102. A helical membrane pass occupies residues 120 to 140 (IVASTASSVALILLLVVLFVL). Disordered stretches follow at residues 202-241 (GSAP…CEAW) and 256-302 (TSSW…LKEA). Composition is skewed to polar residues over residues 212–222 (REQQLQGQEAC), 256–267 (TSSWVAGSGSSR), and 279–290 (SDIQSLLSLTSE).

The protein resides in the membrane. In terms of biological role, may play a role in growth-suppressive activity and cell death. May be involved in the production of chemokine molecules in umbilical vein endothelial cells (HUVECs) cultured in THP1 monocyte LPS-induced medium. Plays a role in preventing tumor onset. The chain is Sushi domain-containing protein 6 from Mus musculus (Mouse).